The sequence spans 445 residues: Trigger factor (445 aa).

Residues 172–257 (GDQVVIDFVG…VKSVNWAHMP (86 aa)) enclose the PPIase FKBP-type domain.

This sequence belongs to the FKBP-type PPIase family. Tig subfamily.

It localises to the cytoplasm. It catalyses the reaction [protein]-peptidylproline (omega=180) = [protein]-peptidylproline (omega=0). Its function is as follows. Involved in protein export. Acts as a chaperone by maintaining the newly synthesized protein in an open conformation. Functions as a peptidyl-prolyl cis-trans isomerase. The protein is Trigger factor of Polynucleobacter asymbioticus (strain DSM 18221 / CIP 109841 / QLW-P1DMWA-1) (Polynucleobacter necessarius subsp. asymbioticus).